Here is a 149-residue protein sequence, read N- to C-terminus: UPF0178 protein Pmen_0294 (149 aa).

This sequence belongs to the UPF0178 family.

This Ectopseudomonas mendocina (strain ymp) (Pseudomonas mendocina) protein is UPF0178 protein Pmen_0294.